A 244-amino-acid polypeptide reads, in one-letter code: Small ribosomal subunit protein eS4 (244 aa).

Basic residues predominate over residues 1–14; that stretch reads MANKGPRKHLKRLP. Residues 1–36 are disordered; it reads MANKGPRKHLKRLPAPKNWQISRKTNKYTTRPSAGP. Residues 19–32 show a composition bias toward polar residues; sequence WQISRKTNKYTTRP. The S4 RNA-binding domain occupies 43–106; it reads LPLLLVLRDL…NESFLVVLDE (64 aa).

It belongs to the eukaryotic ribosomal protein eS4 family.

In Methanococcus aeolicus (strain ATCC BAA-1280 / DSM 17508 / OCM 812 / Nankai-3), this protein is Small ribosomal subunit protein eS4.